Reading from the N-terminus, the 1925-residue chain is Diacylglycerol kinase eta (1925 aa).

A PH domain is found at A82–A175. 2 consecutive Phorbol-ester/DAG-type zinc fingers follow at residues H195 to C245 and P268 to C319. In terms of domain architecture, DAGKc spans G350–K486. Disordered regions lie at residues E620–E641, A783–E805, D847–Q872, T1013–Q1065, D1113–Y1141, N1167–S1234, I1256–D1276, and F1385–E1405. A compositionally biased stretch (polar residues) spans L792–T802. Over residues A863–Q872 the composition is skewed to basic and acidic residues. Residues N1115–E1128 are compositionally biased toward basic and acidic residues. Over residues N1167–T1187 the composition is skewed to low complexity. A compositionally biased stretch (basic and acidic residues) spans S1386–E1405. The SAM domain maps to W1862–N1925.

The protein belongs to the eukaryotic diacylglycerol kinase family.

It is found in the cytoplasm. The enzyme catalyses a 1,2-diacyl-sn-glycerol + ATP = a 1,2-diacyl-sn-glycero-3-phosphate + ADP + H(+). In terms of biological role, phosphorylates diacylglycerol (DAG) to generate phosphatidic acid (PA). The polypeptide is Diacylglycerol kinase eta (Drosophila mojavensis (Fruit fly)).